The following is a 159-amino-acid chain: Protransforming growth factor alpha (159 aa).

The N-terminal stretch at 1–23 (MVPATGQLALLALGILLAVCQAL) is a signal peptide. Positions 24 to 38 (ENSTSPLSDSPVAAA) are cleaved as a propeptide — removed in mature form. The Extracellular segment spans residues 24 to 97 (ENSTSPLSDS…AVVAASQKKQ (74 aa)). Residue N25 is glycosylated (N-linked (GlcNAc...) asparagine). One can recognise an EGF-like domain in the interval 44-83 (NKCPDSHTQYCFHGTCRFLVQEEKPACVCHSGYVGVRCEH). 3 cysteine pairs are disulfide-bonded: C46-C59, C54-C70, and C72-C81. Positions 89–159 (VVAASQKKQA…TACCHSETVV (71 aa)) are cleaved as a propeptide — removed in mature form. A helical membrane pass occupies residues 98–123 (AITALVVVSIVALAVLIITCVLIHCC). Residues 124-159 (QLRKHCEWCRALVCRHEKPSALLKGRTACCHSETVV) are Cytoplasmic-facing. Residues C152 and C153 are each lipidated (S-palmitoyl cysteine).

As to quaternary structure, interacts with the PDZ domains of SDCBP and SNTA1. The interaction with SDCBP, is required for the targeting to the cell surface. In the endoplasmic reticulum, in its immature form (i.e. with a prosegment and lacking full N-glycosylation), interacts with CNIH. In the Golgi apparatus, may form a complex with CNIH and GORASP2. Interacts (via cytoplasmic C-terminal domain) with NKD2. Interacts with MAGI3.

It is found in the secreted. The protein localises to the extracellular space. Its subcellular location is the cell membrane. Functionally, TGF alpha is a mitogenic polypeptide that is able to bind to the EGF receptor/EGFR and to act synergistically with TGF beta to promote anchorage-independent cell proliferation in soft agar. This Mus musculus (Mouse) protein is Protransforming growth factor alpha (Tgfa).